Here is a 414-residue protein sequence, read N- to C-terminus: Glucose-1-phosphate adenylyltransferase (414 aa).

Alpha-D-glucose 1-phosphate is bound by residues Tyr-103, Gly-168, 183-184, and Ser-201; that span reads EK.

This sequence belongs to the bacterial/plant glucose-1-phosphate adenylyltransferase family. As to quaternary structure, homotetramer.

It carries out the reaction alpha-D-glucose 1-phosphate + ATP + H(+) = ADP-alpha-D-glucose + diphosphate. The protein operates within glycan biosynthesis; glycogen biosynthesis. Functionally, involved in the biosynthesis of ADP-glucose, a building block required for the elongation reactions to produce glycogen. Catalyzes the reaction between ATP and alpha-D-glucose 1-phosphate (G1P) to produce pyrophosphate and ADP-Glc. This is Glucose-1-phosphate adenylyltransferase from Thermus thermophilus (strain ATCC 27634 / DSM 579 / HB8).